Consider the following 1383-residue polypeptide: Cell surface hyaluronidase (1383 aa).

Residues 1 to 76 (MYAAGSRGHS…QRTPSESRKR (76 aa)) form a disordered region. The Cytoplasmic portion of the chain corresponds to 1–82 (MYAAGSRGHS…SRKRKRHKNT (82 aa)). A phosphoserine mark is found at S10, S53, and S63. Residues 83 to 103 (FICFAITSFSFFVALAVILGI) form a helical; Signal-anchor for type II membrane protein membrane-spanning segment. The Extracellular portion of the chain corresponds to 104–1383 (SSKYAPDENC…DLLQQALKVL (1280 aa)). Positions 121-245 (RNWDPGQDSA…QRTSWTMLAR (125 aa)) constitute a G8 domain. The GG-type lectin 1 domain occupies 255–412 (GSYAFEKDFS…ISLSGFRVDI (158 aa)). The N-linked (GlcNAc...) asparagine glycan is linked to N292. PbH1 repeat units lie at residues 669-691 (HPNN…WYLF), 711-733 (TPLG…FVDK), and 791-812 (GGDI…TFAS). N-linked (GlcNAc...) asparagine glycans are attached at residues N914 and N1234. The region spanning 1208–1366 (KSYLPVRFQS…MEEYGCSRTG (159 aa)) is the GG-type lectin 2 domain.

This sequence belongs to the CEMIP family. It depends on Ca(2+) as a cofactor. As to expression, widely expressed. Strongly expressed in endothelial cells in the subcapsular sinus of lymph nodes and in the liver sinusoid, two primary sites implicated in systemic hyaluronan turnover.

The protein resides in the cell membrane. The enzyme catalyses Random hydrolysis of (1-&gt;4)-linkages between N-acetyl-beta-D-glucosamine and D-glucuronate residues in hyaluronate.. In terms of biological role, cell surface hyaluronidase that mediates the initial cleavage of extracellular high-molecular-weight hyaluronan into intermediate-size hyaluronan of approximately 5 kDa fragments. Very specific to hyaluronan; not able to cleave chondroitin sulfate or dermatan sulfate. Has an essential function in systemic hyaluronan catabolism and turnover and regulates cell adhesion and migration via hyaluronan degradation at focal adhesion sites. Acts as a regulator of angiogenesis and heart morphogenesis by mediating degradation of extracellular hyaluronan, thereby regulating VEGF signaling. The protein is Cell surface hyaluronidase of Mus musculus (Mouse).